The primary structure comprises 580 residues: Alpha-thujene synthase TPS3, chloroplastic (580 aa).

The transit peptide at 1–26 (MALQLLTPSFSFQHSPSPHRLTTLRY) directs the protein to the chloroplast. Residues R296, D333, D337, R473, and D476 each contribute to the (2E)-geranyl diphosphate site. Positions 333 and 337 each coordinate Mg(2+). The DDXXD motif signature appears at 333 to 337 (DDVYD). Mg(2+)-binding residues include D476, T480, and E484.

This sequence belongs to the terpene synthase family. Tpsb subfamily. As to quaternary structure, monomer. Mg(2+) serves as cofactor. It depends on Mn(2+) as a cofactor. Mostly expressed in developing and mature fruits, and, to a lower extent, in male leaves. Barely detectable in female leaves and shoots.

It is found in the plastid. The protein localises to the chloroplast. The catalysed reaction is (2E)-geranyl diphosphate = alpha-thujene + diphosphate. It catalyses the reaction (2E)-geranyl diphosphate = (1R,5R)-sabinene + diphosphate. It participates in secondary metabolite biosynthesis; terpenoid biosynthesis. Its function is as follows. Monoterpene synthase (TPS) involved in the biosynthesis of monoterpene natural products used by traditional Chinese medicine to treat headache, inflammation and intoxication. Catalyzes the conversion of (2E)-geranyl diphosphate (GPP) into alpha-thujene and (1R,5R)-sabinene. The chain is Alpha-thujene synthase TPS3, chloroplastic from Litsea cubeba (Aromatic litsea).